Here is a 1157-residue protein sequence, read N- to C-terminus: ATP-dependent helicase/deoxyribonuclease subunit B (1157 aa).

The region spanning 1 to 275 (MTLHAYLGRA…QYFNQLYRFN (275 aa)) is the UvrD-like helicase ATP-binding domain. 8 to 15 (GRAGTGKS) lines the ATP pocket. The UvrD-like helicase C-terminal domain maps to 269–583 (NQLYRFNNQD…SIGTMDLAKV (315 aa)). Residues Cys-784, Cys-1112, Cys-1115, and Cys-1121 each contribute to the [4Fe-4S] cluster site.

This sequence belongs to the helicase family. AddB/RexB type 1 subfamily. In terms of assembly, heterodimer of AddA and AddB. Mg(2+) serves as cofactor. [4Fe-4S] cluster is required as a cofactor.

In terms of biological role, the heterodimer acts as both an ATP-dependent DNA helicase and an ATP-dependent, dual-direction single-stranded exonuclease. Recognizes the chi site generating a DNA molecule suitable for the initiation of homologous recombination. The AddB subunit has 5' -&gt; 3' nuclease activity but not helicase activity. This chain is ATP-dependent helicase/deoxyribonuclease subunit B, found in Staphylococcus aureus (strain JH9).